Here is a 301-residue protein sequence, read N- to C-terminus: Probable alpha-L-glutamate ligase 1 (301 aa).

Residues 104 to 287 (MQLMSRRGIG…VAGAIIEFVE (184 aa)) enclose the ATP-grasp domain. ATP is bound by residues lysine 141, 178–179 (EY), aspartate 187, and 211–213 (RSN). Positions 248, 260, and 262 each coordinate Mg(2+). 3 residues coordinate Mn(2+): aspartate 248, glutamate 260, and asparagine 262.

It belongs to the RimK family. Mg(2+) is required as a cofactor. It depends on Mn(2+) as a cofactor.

This is Probable alpha-L-glutamate ligase 1 from Shewanella putrefaciens (strain CN-32 / ATCC BAA-453).